The sequence spans 42 residues: Photosystem I reaction center subunit IX (42 aa).

The helical transmembrane segment at Tyr-7–Ile-27 threads the bilayer.

Belongs to the PsaJ family.

Its subcellular location is the plastid. The protein resides in the chloroplast thylakoid membrane. Functionally, may help in the organization of the PsaE and PsaF subunits. This is Photosystem I reaction center subunit IX from Huperzia lucidula (Shining clubmoss).